The primary structure comprises 146 residues: Tol-Pal system protein TolR (146 aa).

Residues V16 to M36 traverse the membrane as a helical segment.

The protein belongs to the ExbD/TolR family. The Tol-Pal system is composed of five core proteins: the inner membrane proteins TolA, TolQ and TolR, the periplasmic protein TolB and the outer membrane protein Pal. They form a network linking the inner and outer membranes and the peptidoglycan layer.

The protein localises to the cell inner membrane. Part of the Tol-Pal system, which plays a role in outer membrane invagination during cell division and is important for maintaining outer membrane integrity. This Pseudomonas aeruginosa (strain ATCC 15692 / DSM 22644 / CIP 104116 / JCM 14847 / LMG 12228 / 1C / PRS 101 / PAO1) protein is Tol-Pal system protein TolR.